The chain runs to 473 residues: Catalase easC (473 aa).

Low complexity predominate over residues 1–15; that stretch reads MASEVSVASSGSEHS. The segment at 1–31 is disordered; the sequence is MASEVSVASSGSEHSGAQKCPFQDPGLSSMD. Residue His54 is part of the active site. Position 344 (Tyr344) interacts with heme. The interval 369–388 is disordered; the sequence is DGARPEKAEMAPQKVPSQEH.

The protein belongs to the catalase family. Heme serves as cofactor.

It participates in alkaloid biosynthesis; ergot alkaloid biosynthesis. Its function is as follows. Catalase; part of the gene cluster that mediates the biosynthesis of fungal ergot alkaloid. DmaW catalyzes the first step of ergot alkaloid biosynthesis by condensing dimethylallyl diphosphate (DMAP) and tryptophan to form 4-dimethylallyl-L-tryptophan. The second step is catalyzed by the methyltransferase easF that methylates 4-dimethylallyl-L-tryptophan in the presence of S-adenosyl-L-methionine, resulting in the formation of 4-dimethylallyl-L-abrine. The catalase easC and the FAD-dependent oxidoreductase easE then transform 4-dimethylallyl-L-abrine to chanoclavine-I which is further oxidized by easD in the presence of NAD(+), resulting in the formation of chanoclavine-I aldehyde. Agroclavine dehydrogenase easG then mediates the conversion of chanoclavine-I aldehyde to agroclavine via a non-enzymatic adduct reaction: the substrate is an iminium intermediate that is formed spontaneously from chanoclavine-I aldehyde in the presence of glutathione. The presence of easA is not required to complete this reaction. Further conversion of agroclavine to paspalic acid is a two-step process involving oxidation of agroclavine to elymoclavine and of elymoclavine to paspalic acid, the second step being performed by the elymoclavine oxidase cloA. Paspalic acid is then further converted to D-lysergic acid. Ergopeptines are assembled from D-lysergic acid and three different amino acids by the D-lysergyl-peptide-synthetases composed each of a monomudular and a trimodular nonribosomal peptide synthetase subunit. LpsB and lpsC encode the monomodular subunits responsible for D-lysergic acid activation and incorporation into the ergopeptine backbone. LpsA1 and A2 subunits encode the trimodular nonribosomal peptide synthetase assembling the tripeptide portion of ergopeptines. LpsA1 is responsible for formation of the major ergopeptine, ergotamine, and lpsA2 for alpha-ergocryptine, the minor ergopeptine of the total alkaloid mixture elaborated by C.purpurea. D-lysergyl-tripeptides are assembled by the nonribosomal peptide synthetases and released as N-(D-lysergyl-aminoacyl)-lactams. Cyclolization of the D-lysergyl-tripeptides is performed by the Fe(2+)/2-ketoglutarate-dependent dioxygenase easH which introduces a hydroxyl group into N-(D-lysergyl-aminoacyl)-lactam at alpha-C of the aminoacyl residue followed by spontaneous condensation with the terminal lactam carbonyl group. The polypeptide is Catalase easC (Claviceps purpurea (Ergot fungus)).